The following is a 518-amino-acid chain: MLPTYFGTSNFLAAFAVWMGVVVLAFAIFCVRRLYFHPYSKYPGPLLGKLTNYYAVYHSWKGDQHIDMWRCHEKYGPYVRYGPNELSINTAAGLKEIYSHGRNFKKSVKYNAMVHQAANTLTTIDKRKHGKKRRLISQAFSDAAFRSYEETIQQKIAQLCTALRRRDDDSNEIVPDGNWGPAKNMSHWCDWFTFDVMCSVIFGVPWSSLTEKTYRNVPHLIEVSNVRVGCLIEAGGSKNMKIDKYLFPAAIAARNQFVKFVNDIIRQGMAMSAKGSLKGAFALLRDATDPETQEPLSFKELCGESATLVVAGTDTTSTALAASIYYLCNHPKVYERAVQEVRSTFQSRAEIGLGPKVNSCTYLRAVIEESMRLSPSAPGPLWRQADAGGATVDGQYIPQGLEAGTCVYAIQHHPEIYPQPFKFVPERWLGPEAVPEQYRSDYSPFAGFTPFSIGPRGCIGKPLAYIELTLTLCHILYAFDMRLPQGVNVNEDAEYQLALHITAAKEGPLVEFRPRTVV.

Residues 11–31 traverse the membrane as a helical segment; it reads FLAAFAVWMGVVVLAFAIFCV. A glycan (N-linked (GlcNAc...) asparagine) is linked at N184. C458 contacts heme.

Belongs to the cytochrome P450 family. The cofactor is heme.

The protein resides in the membrane. The protein operates within secondary metabolite biosynthesis. Functionally, cytochrome P450 monooxygenase; part of the gene cluster that mediates the biosynthesis of aspercryptins, linear lipopeptides built from six amino acids including 2 highly unusual and nonproteogenic amino acids, 2-amino-octanoic acid (2aoa) and 2-amino-dodecanol (2adol). The core structure of aspercryptins is as follows: Ser/Ala-Thr-Ile/Val-2aoa-Asn-2adol. The first step of aspercryptin biosynthesis is the generation of the fatty acid precursors, octanoic and dodecanoic acids, by the FAS subunits atnF and atnM. The fatty acid precursors are likely transformed into the corresponding alpha-amino fatty acids in three steps. First, they are hydroxylated by the cytochrome P450 monooxygenase atnE, then oxidized to the corresponding alpha-keto acids by the NAD(P)-dependent oxidoreductase atnD, and finally converted to the alpha-amino fatty acids by the PLP-dependent aminotransferases atnH or atnJ. the alpha-amino fatty acids, 2-amino-octanoic and 2-amino-dodecanoic acids, are recognized, activated, and covalently tethered to the NRPS atnA by its fourth and sixth adenylation domains. The second module of atnA is the Thr module and contains an epimerase (E) domain responsible for the epimerization of Thr to D-allo-Thr. Additionally, despite atnA having only one epimerase domain, the first amino acid of aspercryptin A1 is D-Ser, suggesting that serine is either loaded directly as D-Ser on the first module or that the epimerase domain in the threonine module epimerizes both L-Ser and L-Thr. After condensation of the hexapeptide of aspercryptin, the C-terminal reductase (TE) domain might be involved in the reductive release and production of the aldehyde hexapeptide. Further reduction would generate aspercryptins. The variety of aspercryptins produced reflects the flexibility of the atnA NRPS, allowing incorporation of alanine instead of serine, valine for isoleucine, and a C10 fatty amino alcohol instead of the C12 version. AtnB seems to be involved in the selectivity for Ile versus Val by the third module. Moreover, type B, C and D aspercryptins have an additional N-terminal cichorine, acetyl and propionyl group respectively. This is Cytochrome P450 monooxygenase atnE from Emericella nidulans (strain FGSC A4 / ATCC 38163 / CBS 112.46 / NRRL 194 / M139) (Aspergillus nidulans).